The chain runs to 440 residues: Thymidine phosphorylase (440 aa).

Belongs to the thymidine/pyrimidine-nucleoside phosphorylase family. Homodimer.

It carries out the reaction thymidine + phosphate = 2-deoxy-alpha-D-ribose 1-phosphate + thymine. It functions in the pathway pyrimidine metabolism; dTMP biosynthesis via salvage pathway; dTMP from thymine: step 1/2. Its function is as follows. The enzymes which catalyze the reversible phosphorolysis of pyrimidine nucleosides are involved in the degradation of these compounds and in their utilization as carbon and energy sources, or in the rescue of pyrimidine bases for nucleotide synthesis. In Enterobacter sp. (strain 638), this protein is Thymidine phosphorylase.